A 380-amino-acid polypeptide reads, in one-letter code: Cytochrome b (380 aa).

The next 4 membrane-spanning stretches (helical) occupy residues 34–54 (FGSL…LLAM), 78–99 (WLLH…FLHI), 114–134 (WNTG…GYVL), and 179–199 (FFAL…IHLM). His-84 and His-98 together coordinate heme b. Heme b-binding residues include His-183 and His-197. An a ubiquinone-binding site is contributed by His-202. The next 4 membrane-spanning stretches (helical) occupy residues 227–247 (IKDI…TLFS), 289–309 (LGGV…PFLH), 321–341 (LSQT…WVGS), and 348–368 (FIII…ILFP).

The protein belongs to the cytochrome b family. As to quaternary structure, the cytochrome bc1 complex contains 11 subunits: 3 respiratory subunits (MT-CYB, CYC1 and UQCRFS1), 2 core proteins (UQCRC1 and UQCRC2) and 6 low-molecular weight proteins (UQCRH/QCR6, UQCRB/QCR7, UQCRQ/QCR8, UQCR10/QCR9, UQCR11/QCR10 and a cleavage product of UQCRFS1). This cytochrome bc1 complex then forms a dimer. It depends on heme b as a cofactor.

It is found in the mitochondrion inner membrane. Its function is as follows. Component of the ubiquinol-cytochrome c reductase complex (complex III or cytochrome b-c1 complex) that is part of the mitochondrial respiratory chain. The b-c1 complex mediates electron transfer from ubiquinol to cytochrome c. Contributes to the generation of a proton gradient across the mitochondrial membrane that is then used for ATP synthesis. The protein is Cytochrome b (MT-CYB) of Meleagris gallopavo (Wild turkey).